The chain runs to 817 residues: tRNA(Met) cytidine acetyltransferase TmcA (817 aa).

Residues glutamine 265, 289 to 298 (GRGKSVSVGI), and arginine 439 contribute to the ATP site. The region spanning 469–664 (ELIRKMEVYL…YTAIVIKPIS (196 aa)) is the N-acetyltransferase domain. Acetyl-CoA is bound by residues 589 to 591 (IAT), 596 to 602 (MDLGLGS), glutamate 629, and arginine 636.

It belongs to the RNA cytidine acetyltransferase family. TmcA subfamily.

It localises to the cytoplasm. The enzyme catalyses cytidine(34) in elongator tRNA(Met) + acetyl-CoA + ATP + H2O = N(4)-acetylcytidine(34) in elongator tRNA(Met) + ADP + phosphate + CoA + H(+). It catalyses the reaction a cytidine in RNA + acetyl-CoA + ATP + H2O = an N(4)-acetylcytidine in RNA + ADP + phosphate + CoA + H(+). The catalysed reaction is a cytidine in tRNA + acetyl-CoA + ATP + H2O = an N(4)-acetylcytidine in tRNA + ADP + phosphate + CoA + H(+). It carries out the reaction a cytidine in mRNA + acetyl-CoA + ATP + H2O = an N(4)-acetylcytidine in mRNA + ADP + phosphate + CoA + H(+). Its function is as follows. Catalyzes the formation of N(4)-acetylcytidine (ac(4)C) at the wobble position of tRNA(Met), by using acetyl-CoA as an acetyl donor and ATP (or GTP). Functionally, catalyzes the formation of N(4)-acetylcytidine (ac(4)C) sites in rRNA, tRNA, mRNA and non-coding (nc) RNA, almost always on the middle C of a CCG motif. In hyperthermophiles more acetylation is seen at higher temperatures. This is tRNA(Met) cytidine acetyltransferase TmcA from Pyrococcus abyssi (strain GE5 / Orsay).